A 294-amino-acid chain; its full sequence is Protein RarD (294 aa).

At 1–11 the chain is on the cytoplasmic side; that stretch reads MDAKQTRQGVL. The helical transmembrane segment at 12 to 34 threads the bilayer; sequence LALAAYFIWGIAPAYFKLIYYVP. The region spanning 18 to 145 is the EamA domain; it reads FIWGIAPAYF…AVCGVLVQLW (128 aa). Residues 35-37 lie on the Periplasmic side of the membrane; that stretch reads ADE. A helical membrane pass occupies residues 38–60; that stretch reads ILTHRVIWSFFFMVALLSVSRQW. At 61–72 the chain is on the cytoplasmic side; that stretch reads RQVKRLLKTPKK. The chain crosses the membrane as a helical span at residues 73 to 95; sequence IFLLALSAVLVGGNWLLFIWAVN. The Periplasmic portion of the chain corresponds to 96-99; sequence NHHM. A helical membrane pass occupies residues 100–122; that stretch reads LEASLGYFINPLVNILLGMIFLG. At 123–128 the chain is on the cytoplasmic side; sequence ERFRRM. The chain crosses the membrane as a helical span at residues 129–146; it reads QWLAVILAVCGVLVQLWT. The Periplasmic segment spans residues 147–149; the sequence is FGS. The helical transmembrane segment at 150-167 threads the bilayer; sequence LPIIALGLAFSFAFYGLV. Over 168–179 the chain is Cytoplasmic; it reads RKKIAVEAQTGM. The helical transmembrane segment at 180-197 threads the bilayer; the sequence is LVETLWLLPVAAIYLFSI. Residues 198–211 are Periplasmic-facing; the sequence is ADSATSHMGQNALS. Residues 212-234 form a helical membrane-spanning segment; sequence LNLLLMAAGVVTTIPLLCFTGAA. The Cytoplasmic portion of the chain corresponds to 235–238; the sequence is TRLR. A helical transmembrane segment spans residues 239-261; it reads LSTLGFFQYIGPTLMFLLAVTFY. Residues 262–270 lie on the Periplasmic side of the membrane; it reads GEVPGADKM. A helical membrane pass occupies residues 271–290; sequence VTFAFIWVALAIFVMDAIYT. Topologically, residues 291–294 are cytoplasmic; sequence QRKK.

Belongs to the EamA transporter family.

The protein resides in the cell inner membrane. This is Protein RarD (rarD) from Salmonella typhi.